Consider the following 122-residue polypeptide: UPF0102 protein RHECIAT_CH0000358 (122 aa).

It belongs to the UPF0102 family.

The polypeptide is UPF0102 protein RHECIAT_CH0000358 (Rhizobium etli (strain CIAT 652)).